A 105-amino-acid polypeptide reads, in one-letter code: Nucleoid-associated protein lin2851 (105 aa).

Residues 1-16 (MRGMGNMQGMMKQMQK) show a composition bias toward low complexity. The segment at 1–23 (MRGMGNMQGMMKQMQKMQKEMAK) is disordered.

Belongs to the YbaB/EbfC family. Homodimer.

The protein resides in the cytoplasm. The protein localises to the nucleoid. Functionally, binds to DNA and alters its conformation. May be involved in regulation of gene expression, nucleoid organization and DNA protection. This is Nucleoid-associated protein lin2851 from Listeria innocua serovar 6a (strain ATCC BAA-680 / CLIP 11262).